Here is a 342-residue protein sequence, read N- to C-terminus: Anthranilate phosphoribosyltransferase (342 aa).

Residues Gly81, 84 to 85 (GD), Thr89, 91 to 94 (NVST), 109 to 117 (KHGNRAASS), and Ala121 contribute to the 5-phospho-alpha-D-ribose 1-diphosphate site. Gly81 is an anthranilate binding site. Ser93 is a binding site for Mg(2+). Asn112 contributes to the anthranilate binding site. Arg167 contacts anthranilate. Positions 226 and 227 each coordinate Mg(2+).

Belongs to the anthranilate phosphoribosyltransferase family. Homodimer. Mg(2+) is required as a cofactor.

It carries out the reaction N-(5-phospho-beta-D-ribosyl)anthranilate + diphosphate = 5-phospho-alpha-D-ribose 1-diphosphate + anthranilate. It functions in the pathway amino-acid biosynthesis; L-tryptophan biosynthesis; L-tryptophan from chorismate: step 2/5. Catalyzes the transfer of the phosphoribosyl group of 5-phosphorylribose-1-pyrophosphate (PRPP) to anthranilate to yield N-(5'-phosphoribosyl)-anthranilate (PRA). This Beijerinckia indica subsp. indica (strain ATCC 9039 / DSM 1715 / NCIMB 8712) protein is Anthranilate phosphoribosyltransferase.